The following is a 425-amino-acid chain: E3 ubiquitin-protein ligase TRIM31 (425 aa).

The RING-type zinc finger occupies 16–57 (CPICLDILQKPVTIDCGHNFCLKCITQIGETSCGFFKCPLCK). A B box-type zinc finger spans residues 90 to 131 (RKEATCPRHQEMFHYFCEDDGKFLCFVCRESKDHKSHNVSLI). The Zn(2+) site is built by Cys95, His98, Cys117, and His123. 2 coiled-coil regions span residues 126–162 (HNVS…VKAQ) and 270–307 (LELE…DENR). A disordered region spans residues 328-360 (HKMNKTSEPGSSSAGGRTTSGPPNHHSSAPSHS). A compositionally biased stretch (low complexity) spans 336–360 (PGSSSAGGRTTSGPPNHHSSAPSHS).

It belongs to the TRIM/RBCC family. May form oligomers. Interacts with isoform p52shc of SHC1. Auto-ubiquitinated (in vitro). As to expression, up-regulated in gastric adenocarcinomas.

The protein localises to the cytoplasm. It is found in the mitochondrion. The enzyme catalyses S-ubiquitinyl-[E2 ubiquitin-conjugating enzyme]-L-cysteine + [acceptor protein]-L-lysine = [E2 ubiquitin-conjugating enzyme]-L-cysteine + N(6)-ubiquitinyl-[acceptor protein]-L-lysine.. It participates in protein modification; protein ubiquitination. Its function is as follows. E3 ubiquitin-protein ligase that acts as a regulator of antiviral immune response and inflammation by mediating ubiquitination of substrates. Acts as a regulator of innate immune defense against viruses by mediating 'Lys-63'-linked ubiquitination of MAVS, promoting MAVS polymerization and formation of three-stranded helical filaments on mitochondria. Acts as a negative regulator of the NLRP3 inflammasome by catalyzing 'Lys-48'-linked ubiquitination of NLRP3, leading to its degradation. Regulator of Src-induced anchorage independent cell growth. In Homo sapiens (Human), this protein is E3 ubiquitin-protein ligase TRIM31.